Here is a 550-residue protein sequence, read N- to C-terminus: Dihydroxy-acid dehydratase (550 aa).

D81 lines the Mg(2+) pocket. C122 is a binding site for [2Fe-2S] cluster. Mg(2+)-binding residues include D123 and K124. N6-carboxylysine is present on K124. [2Fe-2S] cluster is bound at residue C194. Residue E442 participates in Mg(2+) binding. S467 acts as the Proton acceptor in catalysis.

Belongs to the IlvD/Edd family. In terms of assembly, homodimer. [2Fe-2S] cluster is required as a cofactor. Mg(2+) serves as cofactor.

The enzyme catalyses (2R)-2,3-dihydroxy-3-methylbutanoate = 3-methyl-2-oxobutanoate + H2O. The catalysed reaction is (2R,3R)-2,3-dihydroxy-3-methylpentanoate = (S)-3-methyl-2-oxopentanoate + H2O. It functions in the pathway amino-acid biosynthesis; L-isoleucine biosynthesis; L-isoleucine from 2-oxobutanoate: step 3/4. It participates in amino-acid biosynthesis; L-valine biosynthesis; L-valine from pyruvate: step 3/4. In terms of biological role, functions in the biosynthesis of branched-chain amino acids. Catalyzes the dehydration of (2R,3R)-2,3-dihydroxy-3-methylpentanoate (2,3-dihydroxy-3-methylvalerate) into 2-oxo-3-methylpentanoate (2-oxo-3-methylvalerate) and of (2R)-2,3-dihydroxy-3-methylbutanoate (2,3-dihydroxyisovalerate) into 2-oxo-3-methylbutanoate (2-oxoisovalerate), the penultimate precursor to L-isoleucine and L-valine, respectively. This Methanoregula boonei (strain DSM 21154 / JCM 14090 / 6A8) protein is Dihydroxy-acid dehydratase.